Reading from the N-terminus, the 401-residue chain is Homocysteine-responsive endoplasmic reticulum-resident ubiquitin-like domain member 2 protein (401 aa).

In terms of domain architecture, Ubiquitin-like spans 10–89 (VTLIIKAPNQ…HMVHLVCASR (80 aa)). A disordered region spans residues 87–137 (ASRSPPSSPKSSTDGESHGALASSTNSNSDHSDSTTPSPSQESLSLVAGSS). Composition is skewed to low complexity over residues 88–98 (SRSPPSSPKSS) and 109–126 (SSTNSNSDHSDSTTPSPS). A helical membrane pass occupies residues 299-319 (FIMVMGAMLLVYLHQAGWFPF).

The protein localises to the membrane. Its function is as follows. Could be involved in the unfolded protein response (UPR) pathway. This chain is Homocysteine-responsive endoplasmic reticulum-resident ubiquitin-like domain member 2 protein (Herpud2), found in Rattus norvegicus (Rat).